The sequence spans 234 residues: Zein-alpha GZ19AB11 (234 aa).

The signal sequence occupies residues 1-21 (MAAKIFCLLMLLGLSASAATA).

This sequence belongs to the zein family.

Functionally, zeins are major seed storage proteins. The polypeptide is Zein-alpha GZ19AB11 (Zea mays (Maize)).